Consider the following 216-residue polypeptide: GTP cyclohydrolase 1 (216 aa).

Residues C108, H111, and C179 each coordinate Zn(2+).

Belongs to the GTP cyclohydrolase I family. As to quaternary structure, homomer.

It carries out the reaction GTP + H2O = 7,8-dihydroneopterin 3'-triphosphate + formate + H(+). The protein operates within cofactor biosynthesis; 7,8-dihydroneopterin triphosphate biosynthesis; 7,8-dihydroneopterin triphosphate from GTP: step 1/1. This Shewanella baltica (strain OS223) protein is GTP cyclohydrolase 1.